The primary structure comprises 161 residues: MQDAITAVINAADVQGKYLDNNSIEKLRSYFQTGELRVRAAASISANAAGIIKEAVAKSLLYSDITRPGGNMYTTRRYAACIRDLDYYLRYATYSMLAGDPSILDERVLNGLKETYNSLGVPIGATIQSIQAMKEVTASLVGPDAGQEMGVYFDYICSGLS.

Position 71 is an N4-methylasparagine (N71). C81 is a (2R,3E)-phycocyanobilin binding site.

This sequence belongs to the phycobiliprotein family. Heterodimer of an alpha and a beta chain. Contains one covalently linked phycocyanobilin chromophore.

The protein resides in the plastid. It localises to the chloroplast thylakoid membrane. Its function is as follows. Light-harvesting photosynthetic bile pigment-protein from the phycobiliprotein complex. Allophycocyanin has a maximum absorption at approximately 650 nanometers. This Cyanidium caldarium (Red alga) protein is Allophycocyanin beta chain (apcB).